The primary structure comprises 109 residues: Thiosulfate sulfurtransferase GlpE (109 aa).

The region spanning 16 to 104 is the Rhodanese domain; that stretch reads REQGAVVVDI…WRSTYPAETA (89 aa). The active-site Cysteine persulfide intermediate is the Cys64.

Belongs to the GlpE family.

The protein resides in the cytoplasm. It carries out the reaction thiosulfate + hydrogen cyanide = thiocyanate + sulfite + 2 H(+). The catalysed reaction is thiosulfate + [thioredoxin]-dithiol = [thioredoxin]-disulfide + hydrogen sulfide + sulfite + 2 H(+). Its function is as follows. Transferase that catalyzes the transfer of sulfur from thiosulfate to thiophilic acceptors such as cyanide or dithiols. May function in a CysM-independent thiosulfate assimilation pathway by catalyzing the conversion of thiosulfate to sulfite, which can then be used for L-cysteine biosynthesis. The chain is Thiosulfate sulfurtransferase GlpE from Pseudomonas fluorescens (strain ATCC BAA-477 / NRRL B-23932 / Pf-5).